Here is an 81-residue protein sequence, read N- to C-terminus: MAGSTGERPFVDIITSVRYWVIHALTIPALFLAGWLFVSTGLAYDIFGTPRPNEYFTAERQELPIVSDRFNALEELERLTR.

A helical membrane pass occupies residues valine 21–tryptophan 35. Histidine 23 provides a ligand contact to heme.

This sequence belongs to the PsbE/PsbF family. In terms of assembly, heterodimer of an alpha subunit and a beta subunit. PSII is composed of 1 copy each of membrane proteins PsbA, PsbB, PsbC, PsbD, PsbE, PsbF, PsbH, PsbI, PsbJ, PsbK, PsbL, PsbM, PsbT, PsbX, PsbY, PsbZ, Psb30/Ycf12, peripheral proteins PsbO, CyanoQ (PsbQ), PsbU, PsbV and a large number of cofactors. It forms dimeric complexes. Heme b serves as cofactor.

The protein localises to the cellular thylakoid membrane. Functionally, this b-type cytochrome is tightly associated with the reaction center of photosystem II (PSII). PSII is a light-driven water:plastoquinone oxidoreductase that uses light energy to abstract electrons from H(2)O, generating O(2) and a proton gradient subsequently used for ATP formation. It consists of a core antenna complex that captures photons, and an electron transfer chain that converts photonic excitation into a charge separation. The polypeptide is Cytochrome b559 subunit alpha (Synechococcus sp. (strain JA-2-3B'a(2-13)) (Cyanobacteria bacterium Yellowstone B-Prime)).